We begin with the raw amino-acid sequence, 532 residues long: Probable cyclic di-GMP phosphodiesterase PdeD (532 aa).

A run of 2 helical transmembrane segments spans residues 16-36 (MIVC…VRFI) and 245-265 (LPLA…ATAY). In terms of domain architecture, EAL spans 266-515 (RMSFSREINL…DFPKWLAGSQ (250 aa)).

The protein localises to the cell membrane. It catalyses the reaction 3',3'-c-di-GMP + H2O = 5'-phosphoguanylyl(3'-&gt;5')guanosine + H(+). Phosphodiesterase (PDE) that catalyzes the hydrolysis of cyclic-di-GMP (c-di-GMP) to 5'-pGpG. May serve as a negative regulator of cellulose synthesis (as has been suggested for S.typhimurium); overexpression inhibits cell aggregation in strains able to produce adhesive curli fimbriae. Cyclic-di-GMP is a second messenger which controls cell surface-associated traits in bacteria. The chain is Probable cyclic di-GMP phosphodiesterase PdeD from Escherichia coli (strain K12).